A 538-amino-acid polypeptide reads, in one-letter code: Chaperonin GroEL (538 aa).

Residues 29 to 32 (TLGP), 86 to 90 (DGTTT), G413, 479 to 481 (DAL), and D495 each bind ATP.

It belongs to the chaperonin (HSP60) family. In terms of assembly, forms a cylinder of 14 subunits composed of two heptameric rings stacked back-to-back. Interacts with the co-chaperonin GroES.

It localises to the cytoplasm. The catalysed reaction is ATP + H2O + a folded polypeptide = ADP + phosphate + an unfolded polypeptide.. Together with its co-chaperonin GroES, plays an essential role in assisting protein folding. The GroEL-GroES system forms a nano-cage that allows encapsulation of the non-native substrate proteins and provides a physical environment optimized to promote and accelerate protein folding. The protein is Chaperonin GroEL of Fervidobacterium nodosum (strain ATCC 35602 / DSM 5306 / Rt17-B1).